A 293-amino-acid polypeptide reads, in one-letter code: Nucleotide-binding protein CKR_3143 (293 aa).

Position 8 to 15 (8 to 15 (GLSGAGKT)) interacts with ATP. Residue 59 to 62 (DIRG) coordinates GTP.

This sequence belongs to the RapZ-like family.

In terms of biological role, displays ATPase and GTPase activities. In Clostridium kluyveri (strain NBRC 12016), this protein is Nucleotide-binding protein CKR_3143.